A 121-amino-acid polypeptide reads, in one-letter code: Small ribosomal subunit protein uS13 (121 aa).

Residues glycine 94–lysine 121 form a disordered region.

Belongs to the universal ribosomal protein uS13 family. Part of the 30S ribosomal subunit. Forms a loose heterodimer with protein S19. Forms two bridges to the 50S subunit in the 70S ribosome.

Located at the top of the head of the 30S subunit, it contacts several helices of the 16S rRNA. In the 70S ribosome it contacts the 23S rRNA (bridge B1a) and protein L5 of the 50S subunit (bridge B1b), connecting the 2 subunits; these bridges are implicated in subunit movement. Contacts the tRNAs in the A and P-sites. The sequence is that of Small ribosomal subunit protein uS13 from Verminephrobacter eiseniae (strain EF01-2).